The sequence spans 295 residues: MNTLQSGVLVVDKPAGVTSHQVVGRVRRLMGTRKVGHAGTLDPMASGVLVVGVNRATRLLGHLSLHDKDYTATVRLGVGTVTDDAEGDVTVTTDASAIDDRAIHAAMVRQTGEIQQVPAAVSAIKVNGRRAYAKVRAGEDVVLRPRAVTVSRFEAIAIRRHGQVIDVDVEATCSSGTYVRALARDVGADLGVGGHLTALRRTRVGPFDLTAACVDIFAQDAVTPTPMTMAEAAALSFPVVHVTADQAAAIRVGRRLSFTVPAEVTAIIAETGELLALYRPDDEKDGQSRAICVLV.

Asp42 (nucleophile) is an active-site residue.

This sequence belongs to the pseudouridine synthase TruB family. Type 1 subfamily.

It catalyses the reaction uridine(55) in tRNA = pseudouridine(55) in tRNA. Functionally, responsible for synthesis of pseudouridine from uracil-55 in the psi GC loop of transfer RNAs. This chain is tRNA pseudouridine synthase B, found in Cutibacterium acnes (strain DSM 16379 / KPA171202) (Propionibacterium acnes).